The primary structure comprises 76 residues: Acyl carrier protein (76 aa).

The 76-residue stretch at 1-76 (MATFDDVKDV…AAVDYIDNNQ (76 aa)) folds into the Carrier domain. The residue at position 36 (serine 36) is an O-(pantetheine 4'-phosphoryl)serine.

It belongs to the acyl carrier protein (ACP) family. In terms of processing, 4'-phosphopantetheine is transferred from CoA to a specific serine of apo-ACP by AcpS. This modification is essential for activity because fatty acids are bound in thioester linkage to the sulfhydryl of the prosthetic group.

The protein resides in the cytoplasm. It functions in the pathway lipid metabolism; fatty acid biosynthesis. Its function is as follows. Carrier of the growing fatty acid chain in fatty acid biosynthesis. In Deinococcus radiodurans (strain ATCC 13939 / DSM 20539 / JCM 16871 / CCUG 27074 / LMG 4051 / NBRC 15346 / NCIMB 9279 / VKM B-1422 / R1), this protein is Acyl carrier protein.